The primary structure comprises 266 residues: Small ribosomal subunit protein uS2 (266 aa).

A disordered region spans residues 229–254 (RTSDKEADTTTEEVAQEEVTDTKADE). The segment covering 237-247 (TTTEEVAQEEV) has biased composition (acidic residues).

This sequence belongs to the universal ribosomal protein uS2 family.

The protein is Small ribosomal subunit protein uS2 of Flavobacterium psychrophilum (strain ATCC 49511 / DSM 21280 / CIP 103535 / JIP02/86).